We begin with the raw amino-acid sequence, 244 residues long: Type III pantothenate kinase (244 aa).

6–13 (DVGNTRIK) provides a ligand contact to ATP. Residues Y87 and 94–97 (GIDR) each bind substrate. The active-site Proton acceptor is the D96. Position 117 (D117) interacts with K(+). T120 is an ATP binding site. T172 contributes to the substrate binding site.

The protein belongs to the type III pantothenate kinase family. Homodimer. NH4(+) serves as cofactor. K(+) is required as a cofactor.

The protein localises to the cytoplasm. It catalyses the reaction (R)-pantothenate + ATP = (R)-4'-phosphopantothenate + ADP + H(+). The protein operates within cofactor biosynthesis; coenzyme A biosynthesis; CoA from (R)-pantothenate: step 1/5. Catalyzes the phosphorylation of pantothenate (Pan), the first step in CoA biosynthesis. This Flavobacterium johnsoniae (strain ATCC 17061 / DSM 2064 / JCM 8514 / BCRC 14874 / CCUG 350202 / NBRC 14942 / NCIMB 11054 / UW101) (Cytophaga johnsonae) protein is Type III pantothenate kinase.